We begin with the raw amino-acid sequence, 469 residues long: GDP-fucose protein O-fucosyltransferase 3 (469 aa).

The Cytoplasmic portion of the chain corresponds to 1–9; the sequence is MVNRIWEKR. Residues 10–30 form a helical; Signal-anchor for type II membrane protein membrane-spanning segment; sequence FWISCFFIIFLFILVIFQVMV. Over 31–469 the chain is Lumenal; the sequence is ELGRFEKKET…EFWNLVFKFW (439 aa). N-linked (GlcNAc...) asparagine glycans are attached at residues Asn100, Asn158, Asn308, and Asn333. Residues Cys379 and Cys382 are joined by a disulfide bond. The N-linked (GlcNAc...) asparagine glycan is linked to Asn455.

It belongs to the glycosyltransferase 10 family.

The protein localises to the endoplasmic reticulum membrane. It catalyses the reaction L-threonyl-[protein] + GDP-beta-L-fucose = 3-O-(alpha-L-fucosyl)-L-threonyl-[protein] + GDP + H(+). It carries out the reaction L-seryl-[protein] + GDP-beta-L-fucose = 3-O-(alpha-L-fucosyl)-L-seryl-[protein] + GDP + H(+). It participates in protein modification; protein glycosylation. In terms of biological role, protein O-fucosyltransferase that specifically catalyzes O-fucosylation of serine or threonine residues in EMI domains of target proteins. Attaches fucose through an O-glycosidic linkage. O-fucosylation of EMI domain-containing proteins may be required for facilitating protein folding and secretion. The polypeptide is GDP-fucose protein O-fucosyltransferase 3 (fut10) (Xenopus laevis (African clawed frog)).